The following is a 333-amino-acid chain: Taste receptor type 2 member 123 (333 aa).

Over methionine 1–threonine 13 the chain is Extracellular. N-linked (GlcNAc...) asparagine glycosylation is present at asparagine 7. The chain crosses the membrane as a helical span at residues phenylalanine 14–leucine 34. Over valine 35 to arginine 60 the chain is Cytoplasmic. A helical transmembrane segment spans residues phenylalanine 61 to proline 81. Residues arginine 82–methionine 90 are Extracellular-facing. A helical membrane pass occupies residues glycine 91 to phenylalanine 111. The Cytoplasmic portion of the chain corresponds to tyrosine 112–valine 134. The helical transmembrane segment at isoleucine 135–isoleucine 155 threads the bilayer. The Extracellular portion of the chain corresponds to tyrosine 156 to serine 205. Asparagine 167, asparagine 186, and asparagine 195 each carry an N-linked (GlcNAc...) asparagine glycan. The helical transmembrane segment at leucine 206–leucine 226 threads the bilayer. Residues tryptophan 227 to glutamine 253 lie on the Cytoplasmic side of the membrane. Residues threonine 254–leucine 274 traverse the membrane as a helical segment. Over asparagine 275 to lysine 281 the chain is Extracellular. Residues isoleucine 282–valine 302 traverse the membrane as a helical segment. The Cytoplasmic segment spans residues leucine 303–leucine 333.

This sequence belongs to the G-protein coupled receptor T2R family. In terms of tissue distribution, expressed in subsets of taste receptor cells of the tongue and palate epithelium and exclusively in gustducin-positive cells. Expressed in the duodenum, antrum and fundus (part of the stomach).

It localises to the membrane. Its function is as follows. Gustducin-coupled receptor implicated in the perception of bitter compounds in the oral cavity and the gastrointestinal tract. Signals through PLCB2 and the calcium-regulated cation channel TRPM5. The sequence is that of Taste receptor type 2 member 123 (Tas2r123) from Mus musculus (Mouse).